A 493-amino-acid chain; its full sequence is MSFKDLRSFIDHLEANGELKRISYPVDPHLEMTEIADRVLRAKGPALLFENPTNHSMPVLANLFGTPKRVAMALGKEDPLALRDVGELLAFLKEPEPPRGFKDAISKIPMFKQALNMPPKTVRNPACQQVVKTGDEVDLTQLPIQHCWPGDVAPLVTWGLTITKGPRKSRQNLGIYRQQLLGKNKLIMRWLSHRGGALDFADFKEQFPGERYPVVVALGSDPVTILGAVTPVPDAMSEYAFAGLLRGERTEVCKALSCDLEVPASSEIILEGYIDPDEMAEEGPYGDHTGYYNETDKFPVFTVTHITHRKDPIYHSTYTGRPPDEPAMLGVALNEVFVPILRKQYPEIIDFYLPPEGCSYRMAVISIRKQYPGHAKRVMMGAWSFLRQFMYTKFIVVVDDDVNCRDWNDVIWAITTRMDPKRDTVMIDNTPIDYLDFASPVAGLGSKMGLDATNKWEGETNREWGTPIVMDPKVKQKIDSIWDELGIDDSPTL.

Mn(2+) is bound at residue asparagine 172. Prenylated FMN is bound by residues isoleucine 175–arginine 177, arginine 189–leucine 191, and arginine 194–glycine 195. Glutamate 238 provides a ligand contact to Mn(2+). Aspartate 287 (proton donor) is an active-site residue.

This sequence belongs to the UbiD family. Homohexamer. Prenylated FMN is required as a cofactor. Mn(2+) serves as cofactor.

It localises to the cell membrane. The catalysed reaction is a 4-hydroxy-3-(all-trans-polyprenyl)benzoate + H(+) = a 2-(all-trans-polyprenyl)phenol + CO2. It functions in the pathway cofactor biosynthesis; ubiquinone biosynthesis. Catalyzes the decarboxylation of 3-octaprenyl-4-hydroxy benzoate to 2-octaprenylphenol, an intermediate step in ubiquinone biosynthesis. In Shewanella sp. (strain ANA-3), this protein is 3-octaprenyl-4-hydroxybenzoate carboxy-lyase.